Reading from the N-terminus, the 317-residue chain is MPVQGSQRRLLGSLNSTPTATPHLGLAANQTGAWCLEVSIPDGLFLSLGLVSLVENVLVVTAIAKNRNLHSPMYCFICCLALSDLLVSGSNMLETAVTLLLEAGALAARAAVVQQLDNVIDVITCSSMLSSLCFLGAIAVDRYISIFYALRYHSIVTLPRARRAVAAIWVASVLFSMLFIAYYDHAAVLLCLVVFFLAMLVLMAVLYVHMLARACQHAQGIARLHKRQRPAHQGFGLKGAATLTILLGIFFLCWGPFFLHLTLIVLCPQHPTCSCIFKNFNLFLALIICNAIIDPLIYAFRSQELRRTLKEVLLCSW.

At 1–37 the chain is on the extracellular side; the sequence is MPVQGSQRRLLGSLNSTPTATPHLGLAANQTGAWCLE. Asn-29 is a glycosylation site (N-linked (GlcNAc...) asparagine). A helical membrane pass occupies residues 38 to 63; that stretch reads VSIPDGLFLSLGLVSLVENVLVVTAI. Topologically, residues 64–72 are cytoplasmic; sequence AKNRNLHSP. Residues 73-93 traverse the membrane as a helical segment; that stretch reads MYCFICCLALSDLLVSGSNML. Residues 94–118 lie on the Extracellular side of the membrane; it reads ETAVTLLLEAGALAARAAVVQQLDN. The chain crosses the membrane as a helical span at residues 119–140; the sequence is VIDVITCSSMLSSLCFLGAIAV. Topologically, residues 141–163 are cytoplasmic; the sequence is DRYISIFYALRYHSIVTLPRARR. Residues 164 to 183 traverse the membrane as a helical segment; the sequence is AVAAIWVASVLFSMLFIAYY. Over 184 to 191 the chain is Extracellular; the sequence is DHAAVLLC. Residues 192–211 traverse the membrane as a helical segment; it reads LVVFFLAMLVLMAVLYVHML. The Cytoplasmic segment spans residues 212–240; that stretch reads ARACQHAQGIARLHKRQRPAHQGFGLKGA. A helical membrane pass occupies residues 241–266; that stretch reads ATLTILLGIFFLCWGPFFLHLTLIVL. The Extracellular portion of the chain corresponds to 267–279; it reads CPQHPTCSCIFKN. The helical transmembrane segment at 280–300 threads the bilayer; that stretch reads FNLFLALIICNAIIDPLIYAF. Residues 301-317 are Cytoplasmic-facing; it reads RSQELRRTLKEVLLCSW. Cys-315 carries S-palmitoyl cysteine lipidation.

This sequence belongs to the G-protein coupled receptor 1 family. In terms of assembly, interacts with MGRN1, but does not undergo MGRN1-mediated ubiquitination; this interaction competes with GNAS-binding and thus inhibits agonist-induced cAMP production. Interacts with OPN3; the interaction results in a decrease in MC1R-mediated cAMP signaling and ultimately a decrease in melanin production in melanocytes.

It localises to the cell membrane. Its function is as follows. Receptor for MSH (alpha, beta and gamma) and ACTH. The activity of this receptor is mediated by G proteins which activate adenylate cyclase. Mediates melanogenesis, the production of eumelanin (black/brown) and phaeomelanin (red/yellow), via regulation of cAMP signaling in melanocytes. The protein is Melanocyte-stimulating hormone receptor (MC1R) of Allenopithecus nigroviridis (Allen's swamp monkey).